A 90-amino-acid chain; its full sequence is Molybdopterin synthase sulfur carrier subunit (90 aa).

Glycine 90 carries the post-translational modification 1-thioglycine; alternate. Glycine 90 carries the glycyl adenylate; alternate modification.

This sequence belongs to the MoaD family. MOCS2A subfamily. Heterotetramer; composed of 2 small (Mocs2A) and 2 large (Mocs2B) subunits. Post-translationally, C-terminal thiocarboxylation occurs in 2 steps, it is first acyl-adenylated (-COAMP) via the hesA/moeB/thiF part of MOCS3, then thiocarboxylated (-COSH) via the rhodanese domain of MOCS3.

It is found in the cytoplasm. It participates in cofactor biosynthesis; molybdopterin biosynthesis. Functionally, acts as a sulfur carrier required for molybdopterin biosynthesis. Component of the molybdopterin synthase complex that catalyzes the conversion of precursor Z into molybdopterin by mediating the incorporation of 2 sulfur atoms into precursor Z to generate a dithiolene group. In the complex, serves as sulfur donor by being thiocarboxylated (-COSH) at its C-terminus by MOCS3. After interaction with Mocs2B, the sulfur is then transferred to precursor Z to form molybdopterin. The sequence is that of Molybdopterin synthase sulfur carrier subunit from Drosophila yakuba (Fruit fly).